A 650-amino-acid chain; its full sequence is Acetyl-coenzyme A synthetase (650 aa).

CoA is bound by residues 191–194 (RGGR), Thr311, and Asn335. Residues 387 to 389 (GEP), 411 to 416 (DTWWQT), Asp500, and Arg515 each bind ATP. Residue Ser523 coordinates CoA. Arg526 contributes to the ATP binding site. Residues Val537, His539, and Val542 each contribute to the Mg(2+) site. Arg584 lines the CoA pocket. Lys609 carries the N6-acetyllysine modification.

The protein belongs to the ATP-dependent AMP-binding enzyme family. It depends on Mg(2+) as a cofactor. In terms of processing, acetylated. Deacetylation by the SIR2-homolog deacetylase activates the enzyme.

The enzyme catalyses acetate + ATP + CoA = acetyl-CoA + AMP + diphosphate. Catalyzes the conversion of acetate into acetyl-CoA (AcCoA), an essential intermediate at the junction of anabolic and catabolic pathways. AcsA undergoes a two-step reaction. In the first half reaction, AcsA combines acetate with ATP to form acetyl-adenylate (AcAMP) intermediate. In the second half reaction, it can then transfer the acetyl group from AcAMP to the sulfhydryl group of CoA, forming the product AcCoA. The polypeptide is Acetyl-coenzyme A synthetase (Shewanella putrefaciens (strain CN-32 / ATCC BAA-453)).